The sequence spans 698 residues: DNA ligase (698 aa).

NAD(+) is bound by residues 47–51 (DAQYD), 96–97 (SL), and Glu-128. The active-site N6-AMP-lysine intermediate is the Lys-130. Residues Arg-151, Glu-186, Lys-303, and Lys-327 each contribute to the NAD(+) site. The Zn(2+) site is built by Cys-422, Cys-425, Cys-440, and Cys-446. The region spanning 620–698 (GDNLLLSNQT…EEEWIKMVNE (79 aa)) is the BRCT domain.

It belongs to the NAD-dependent DNA ligase family. LigA subfamily. Mg(2+) serves as cofactor. The cofactor is Mn(2+).

The catalysed reaction is NAD(+) + (deoxyribonucleotide)n-3'-hydroxyl + 5'-phospho-(deoxyribonucleotide)m = (deoxyribonucleotide)n+m + AMP + beta-nicotinamide D-nucleotide.. Functionally, DNA ligase that catalyzes the formation of phosphodiester linkages between 5'-phosphoryl and 3'-hydroxyl groups in double-stranded DNA using NAD as a coenzyme and as the energy source for the reaction. It is essential for DNA replication and repair of damaged DNA. This Orientia tsutsugamushi (strain Boryong) (Rickettsia tsutsugamushi) protein is DNA ligase.